The sequence spans 996 residues: UPF0182 protein CE0802 (996 aa).

The next 7 membrane-spanning stretches (helical) occupy residues 19–39, 63–83, 115–135, 176–196, 212–234, 262–282, and 290–310; these read VTWI…TVGF, IILF…AGYF, ILII…QRSW, STLL…LGGI, GARA…TYWL, KIIL…AIFL, and LAVV…PLML. Residues 920–950 form a disordered region; that stretch reads VPDVNATEDADATTDGEDETPAAPAAPAGSE. Residues 925 to 939 are compositionally biased toward acidic residues; the sequence is ATEDADATTDGEDET. The segment covering 940–950 has biased composition (low complexity); it reads PAAPAAPAGSE.

It belongs to the UPF0182 family.

Its subcellular location is the cell membrane. The sequence is that of UPF0182 protein CE0802 from Corynebacterium efficiens (strain DSM 44549 / YS-314 / AJ 12310 / JCM 11189 / NBRC 100395).